We begin with the raw amino-acid sequence, 432 residues long: MGQAFSITPARRLSGEIAVAGDKSISHRALMLAALAEGESVIEGLLPGDDPRSTAACLRALGAEISGIDGPSVRVRGVGLGRLHEPADVLDMGNSGTTMRLMLGVLAGQPGLFCTLTGDRSLRSRPMLRVVSPLRQMGARIWGREEGGRAPLAVWGEQLRAIDFVSPVASAQVKSAVLLAGLLAEGLTSVSEPVRSRDHSERMLRAFGAEVLVDGTTAAVRGPARLRAQSLRVPGDISSAAFWLVAGSIVPDSQLLLSGVGVNPTRTGVLDALAAMGADIAVENRREVCGEPVADLRVRSAPLKACTIGGEWIPRLVDEIPVLAVAACCAAGKTVIRDAAELRVKESDRLATMARELGRLGAHIEERPDGLVIEGGHRLVGAGVESHDDHRVAMSLAVAGLVATGTTEIADPDCATVSYPQFYEHLARVRQQ.

The 3-phosphoshikimate site is built by K23, S24, and R28. Position 23 (K23) interacts with phosphoenolpyruvate. Phosphoenolpyruvate-binding residues include G96 and R125. 3-phosphoshikimate-binding residues include S170, Q172, D318, and K345. Residue Q172 participates in phosphoenolpyruvate binding. D318 (proton acceptor) is an active-site residue. 2 residues coordinate phosphoenolpyruvate: R349 and R391.

Belongs to the EPSP synthase family. Monomer.

The protein resides in the cytoplasm. It catalyses the reaction 3-phosphoshikimate + phosphoenolpyruvate = 5-O-(1-carboxyvinyl)-3-phosphoshikimate + phosphate. It participates in metabolic intermediate biosynthesis; chorismate biosynthesis; chorismate from D-erythrose 4-phosphate and phosphoenolpyruvate: step 6/7. Catalyzes the transfer of the enolpyruvyl moiety of phosphoenolpyruvate (PEP) to the 5-hydroxyl of shikimate-3-phosphate (S3P) to produce enolpyruvyl shikimate-3-phosphate and inorganic phosphate. In Gloeobacter violaceus (strain ATCC 29082 / PCC 7421), this protein is 3-phosphoshikimate 1-carboxyvinyltransferase.